The chain runs to 241 residues: Proteasome subunit alpha (241 aa).

The protein belongs to the peptidase T1A family. The 20S proteasome core is composed of 14 alpha and 14 beta subunits that assemble into four stacked heptameric rings, resulting in a barrel-shaped structure. The two inner rings, each composed of seven catalytic beta subunits, are sandwiched by two outer rings, each composed of seven alpha subunits. The catalytic chamber with the active sites is on the inside of the barrel. Has a gated structure, the ends of the cylinder being occluded by the N-termini of the alpha-subunits. Is capped by the proteasome-associated ATPase, ARC.

It is found in the cytoplasm. The protein operates within protein degradation; proteasomal Pup-dependent pathway. With respect to regulation, the formation of the proteasomal ATPase ARC-20S proteasome complex, likely via the docking of the C-termini of ARC into the intersubunit pockets in the alpha-rings, may trigger opening of the gate for substrate entry. Interconversion between the open-gate and close-gate conformations leads to a dynamic regulation of the 20S proteasome proteolysis activity. In terms of biological role, component of the proteasome core, a large protease complex with broad specificity involved in protein degradation. The protein is Proteasome subunit alpha of Frankia alni (strain DSM 45986 / CECT 9034 / ACN14a).